A 583-amino-acid polypeptide reads, in one-letter code: uncharacterized protein (583 aa).

Residues 162–424 form the FAD-binding FR-type domain; that stretch reads YGIFAAPILD…RGVQQNPFAK (263 aa).

This sequence belongs to the flavoprotein pyridine nucleotide cytochrome reductase family. FAD serves as cofactor.

The protein localises to the mitochondrion. This is an uncharacterized protein from Schizosaccharomyces pombe (strain 972 / ATCC 24843) (Fission yeast).